A 355-amino-acid polypeptide reads, in one-letter code: Dual-specificity RNA methyltransferase RlmN (355 aa).

Glu86 serves as the catalytic Proton acceptor. One can recognise a Radical SAM core domain in the interval 105–338 (KEARYTVCVS…CTIRESKGLD (234 aa)). A disulfide bridge connects residues Cys112 and Cys343. Positions 119, 123, and 126 each coordinate [4Fe-4S] cluster. Residues 169–170 (GE), Ser201, 224–226 (SLH), and Asn300 each bind S-adenosyl-L-methionine. Cys343 functions as the S-methylcysteine intermediate in the catalytic mechanism.

It belongs to the radical SAM superfamily. RlmN family. It depends on [4Fe-4S] cluster as a cofactor.

The protein localises to the cytoplasm. The catalysed reaction is adenosine(2503) in 23S rRNA + 2 reduced [2Fe-2S]-[ferredoxin] + 2 S-adenosyl-L-methionine = 2-methyladenosine(2503) in 23S rRNA + 5'-deoxyadenosine + L-methionine + 2 oxidized [2Fe-2S]-[ferredoxin] + S-adenosyl-L-homocysteine. The enzyme catalyses adenosine(37) in tRNA + 2 reduced [2Fe-2S]-[ferredoxin] + 2 S-adenosyl-L-methionine = 2-methyladenosine(37) in tRNA + 5'-deoxyadenosine + L-methionine + 2 oxidized [2Fe-2S]-[ferredoxin] + S-adenosyl-L-homocysteine. Functionally, specifically methylates position 2 of adenine 2503 in 23S rRNA and position 2 of adenine 37 in tRNAs. m2A2503 modification seems to play a crucial role in the proofreading step occurring at the peptidyl transferase center and thus would serve to optimize ribosomal fidelity. In Nitratiruptor sp. (strain SB155-2), this protein is Dual-specificity RNA methyltransferase RlmN.